Reading from the N-terminus, the 88-residue chain is Enticin (88 aa).

Residues 1–19 (MKTALPLLLLTCLVAAVQS) form the signal peptide. Intrachain disulfides connect Cys25–Cys33, Cys40–Cys52, and Cys59–Cys67. Positions 69–88 (REQSQLNHDHLNNHTTTQQP) are excised as a propeptide.

In terms of assembly, binds to attractin and temptin.

The protein localises to the secreted. Functionally, a component of the complex of water-borne protein pheromones that stimulates attraction and mating behavior. The polypeptide is Enticin (Aplysia californica (California sea hare)).